A 447-amino-acid polypeptide reads, in one-letter code: Na(+)-translocating NADH-quinone reductase subunit A (447 aa).

The protein belongs to the NqrA family. As to quaternary structure, composed of six subunits; NqrA, NqrB, NqrC, NqrD, NqrE and NqrF.

The enzyme catalyses a ubiquinone + n Na(+)(in) + NADH + H(+) = a ubiquinol + n Na(+)(out) + NAD(+). In terms of biological role, NQR complex catalyzes the reduction of ubiquinone-1 to ubiquinol by two successive reactions, coupled with the transport of Na(+) ions from the cytoplasm to the periplasm. NqrA to NqrE are probably involved in the second step, the conversion of ubisemiquinone to ubiquinol. The polypeptide is Na(+)-translocating NADH-quinone reductase subunit A (Klebsiella pneumoniae subsp. pneumoniae (strain ATCC 700721 / MGH 78578)).